The following is a 478-amino-acid chain: Zinc metalloproteinase/disintegrin (478 aa).

Positions 1-20 are cleaved as a signal peptide; sequence MIQVLLVTICLAAFPYQGSS. The propeptide occupies 21 to 187; it reads IILESGNVND…PIKKASDLNL (167 aa). Positions 193-389 constitute a Peptidase M12B domain; sequence RYVELFIVVD…QKPQCILKKP (197 aa). Intrachain disulfides connect Cys-304–Cys-384, Cys-344–Cys-368, and Cys-346–Cys-351. His-329 serves as a coordination point for Zn(2+). Glu-330 is an active-site residue. Zn(2+) contacts are provided by His-333 and His-339. The propeptide occupies 390–407; the sequence is LRTDTVSTPVSGNELLEA. The region spanning 397-478 is the Disintegrin domain; it reads TPVSGNELLE…ADCPRNGLYG (82 aa). Intrachain disulfides connect Cys-411–Cys-426, Cys-413–Cys-421, Cys-420–Cys-443, Cys-434–Cys-440, Cys-439–Cys-464, and Cys-452–Cys-471. The Cell attachment site; atypical (MVD) motif lies at 456 to 458; sequence MVD.

The protein belongs to the venom metalloproteinase (M12B) family. P-II subfamily. P-IIa sub-subfamily. As to quaternary structure, monomer (disintegrin). Requires Zn(2+) as cofactor. Expressed by the venom gland.

The protein resides in the secreted. The catalysed reaction is Cleavage of 3-Asn-|-Gln-4, 9-Ser-|-His-10 and 14-Ala-|-Leu-15 bonds in insulin B chain and 14-Tyr-|-Gln-15 and 8-Thr-|-Ser-9 in A chain. Cleaves type IV collagen at 73-Ala-|-Gln-74 in alpha1-(IV) and at 7-Gly-|-Leu-8 in alpha2-(IV).. Its function is as follows. Snake venom zinc metalloproteinase that causes hemorrhage by provoking the degradation of the sub-endothelial matrix proteins (fibronectin, laminin, type IV collagen, nidogen, and gelatins). In terms of biological role, potent inhibitor of both collagen- (IC(50)=4 nM) and ADP-induced (IC(50)=8 nM) platelet aggregation. May act by binding to the platelet receptor GPIIb/GPIIIa (ITGA2B/ITGB3). This chain is Zinc metalloproteinase/disintegrin, found in Crotalus atrox (Western diamondback rattlesnake).